Here is a 445-residue protein sequence, read N- to C-terminus: KICSTOR subunit 2 (445 aa).

It belongs to the KICS2 family. In terms of assembly, part of the KICSTOR complex composed of KPTN, ITFG2, KICS2 and SZT2. SZT2 probably serves as a link between the other three proteins in the KICSTOR complex and may mediate the direct interaction with the GATOR complex via GATOR1. The KICSTOR complex interacts directly with the GATOR1 complex and most probably indirectly with the GATOR2 complex in an amino acid-independent manner.

The protein resides in the lysosome membrane. Functionally, as part of the KICSTOR complex functions in the amino acid-sensing branch of the TORC1 signaling pathway. Recruits, in an amino acid-independent manner, the GATOR1 complex to the lysosomal membranes and allows its interaction with GATOR2 and the RAG GTPases. Functions upstream of the RAG GTPases and is required to negatively regulate mTORC1 signaling in absence of amino acids. In absence of the KICSTOR complex mTORC1 is constitutively localized to the lysosome and activated. The KICSTOR complex is also probably involved in the regulation of mTORC1 by glucose. This chain is KICSTOR subunit 2, found in Mus musculus (Mouse).